The primary structure comprises 548 residues: Natural resistance-associated macrophage protein 1 (548 aa).

Residues M1–G11 are compositionally biased toward polar residues. The tract at residues M1–E38 is disordered. The Cytoplasmic segment spans residues M1–L55. Residues W56–G73 traverse the membrane as a helical segment. Over N74 to G82 the chain is Extracellular. Residues A83–L102 traverse the membrane as a helical segment. The Cytoplasmic segment spans residues C103 to E139. A helical membrane pass occupies residues L140–L160. The Extracellular segment spans residues S161–R164. Residues I165–L184 form a helical membrane-spanning segment. Topologically, residues D185 to E193 are cytoplasmic. Residues A194–A214 traverse the membrane as a helical segment. The Extracellular segment spans residues Q215 to E237. A helical membrane pass occupies residues L238–L256. Residues H257–E284 are Cytoplasmic-facing. Residues A285–G304 form a helical membrane-spanning segment. At Q305–G346 the chain is on the extracellular side. A glycan (N-linked (GlcNAc...) asparagine) is linked at N335. Residues V347–L366 form a helical membrane-spanning segment. Residues A367–R397 are Cytoplasmic-facing. A helical membrane pass occupies residues V398–F415. Topologically, residues R416–D426 are extracellular. A helical transmembrane segment spans residues L427–T447. The Cytoplasmic portion of the chain corresponds to S448–K463. The chain crosses the membrane as a helical span at residues V464–V485. Over P486–Y493 the chain is Extracellular. A helical transmembrane segment spans residues F494 to W513. Residues T514 to G548 are Cytoplasmic-facing.

It belongs to the NRAMP family.

Its subcellular location is the late endosome membrane. The protein localises to the lysosome membrane. It catalyses the reaction Zn(2+)(in) + H(+)(out) = Zn(2+)(out) + H(+)(in). It carries out the reaction Fe(2+)(in) + H(+)(out) = Fe(2+)(out) + H(+)(in). The enzyme catalyses Mn(2+)(in) + H(+)(out) = Mn(2+)(out) + H(+)(in). In terms of biological role, macrophage-specific antiporter that fluxes metal ions in either direction against a proton gradient. Localized to late endosomal lysosomal membranes, delivers bivalent cations from the cytosol into these acidic compartments where they may directly affect antimicrobial activity. Involved in iron metabolism and host natural resistance to infection with intracellular parasites. Pathogen resistance involves sequestration of Fe(2+) and Mn(2+), cofactors of both prokaryotic and eukaryotic catalases and superoxide dismutases, not only to protect the macrophage against its own generation of reactive oxygen species, but to deny the cations to the pathogen for synthesis of its protective enzymes. The polypeptide is Natural resistance-associated macrophage protein 1 (SLC11A1) (Bubalus bubalis (Domestic water buffalo)).